Consider the following 282-residue polypeptide: MSSYANHQALAGLTLGKSTDYRDTYDASLLQGVPRSLNRDPRGLKADNLPFHGTDIWTLYELSWLNAKGLPQVAVGHVELDYTSVNLIESKSFKLYLNSFNQTRFNNWDEVRQTLERDLSTCAQGKVSVALYRLDELEGQPIGHFNGTCIDDQDITIDNYEFTTDYLENATSGEKVVEETLVSHLLKSNCLITHQPDWGSIQIQYRGRQIDREKLLRYLVSFRHHNEFHEQCVERIFNDLLRFCQPEKLSVYARYTRRGGLDINPWRSNSDFVPSTTRLVRQ.

88-90 (IES) lines the substrate pocket. 90 to 91 (SK) contacts NADPH. The active-site Thioimide intermediate is the Cys190. Asp197 (proton donor) is an active-site residue. 229–230 (HE) contributes to the substrate binding site. 258–259 (RG) provides a ligand contact to NADPH.

The protein belongs to the GTP cyclohydrolase I family. QueF type 2 subfamily. Homodimer.

It localises to the cytoplasm. It catalyses the reaction 7-aminomethyl-7-carbaguanine + 2 NADP(+) = 7-cyano-7-deazaguanine + 2 NADPH + 3 H(+). Its pathway is tRNA modification; tRNA-queuosine biosynthesis. Its function is as follows. Catalyzes the NADPH-dependent reduction of 7-cyano-7-deazaguanine (preQ0) to 7-aminomethyl-7-deazaguanine (preQ1). The polypeptide is NADPH-dependent 7-cyano-7-deazaguanine reductase (Escherichia coli (strain UTI89 / UPEC)).